Reading from the N-terminus, the 424-residue chain is Histidine--tRNA ligase (424 aa).

Residues 1 to 22 (MSYRRPKGTYDVYPGDAARQEP) are disordered.

It belongs to the class-II aminoacyl-tRNA synthetase family. As to quaternary structure, homodimer.

It is found in the cytoplasm. It carries out the reaction tRNA(His) + L-histidine + ATP = L-histidyl-tRNA(His) + AMP + diphosphate + H(+). In Rubrobacter xylanophilus (strain DSM 9941 / JCM 11954 / NBRC 16129 / PRD-1), this protein is Histidine--tRNA ligase.